Here is a 246-residue protein sequence, read N- to C-terminus: Probable transcriptional regulatory protein HAPS_0943 (246 aa).

The protein belongs to the TACO1 family.

It is found in the cytoplasm. This chain is Probable transcriptional regulatory protein HAPS_0943, found in Glaesserella parasuis serovar 5 (strain SH0165) (Haemophilus parasuis).